The sequence spans 259 residues: 5'-nucleotidase SurE (259 aa).

4 residues coordinate a divalent metal cation: Asp-13, Asp-14, Ser-44, and Asn-100.

This sequence belongs to the SurE nucleotidase family. Requires a divalent metal cation as cofactor.

It localises to the cytoplasm. It catalyses the reaction a ribonucleoside 5'-phosphate + H2O = a ribonucleoside + phosphate. Its function is as follows. Nucleotidase that shows phosphatase activity on nucleoside 5'-monophosphates. The sequence is that of 5'-nucleotidase SurE from Bacteroides thetaiotaomicron (strain ATCC 29148 / DSM 2079 / JCM 5827 / CCUG 10774 / NCTC 10582 / VPI-5482 / E50).